The chain runs to 319 residues: Ubiquinone biosynthesis protein COQ4, mitochondrial (319 aa).

The N-terminal 28 residues, 1–28, are a transit peptide targeting the mitochondrion; it reads MISRSIFSKSVSLQRSQNRSFLLTAASA. Zn(2+)-binding residues include histidine 205, aspartate 206, histidine 209, and glutamate 221.

Belongs to the COQ4 family. In terms of assembly, component of a multi-subunit COQ enzyme complex, composed of at least COQ3, COQ4, COQ5, COQ6, COQ7 and COQ9. Zn(2+) serves as cofactor.

It localises to the mitochondrion inner membrane. It carries out the reaction a 4-hydroxy-3-methoxy-5-(all-trans-polyprenyl)benzoate + H(+) = a 2-methoxy-6-(all-trans-polyprenyl)phenol + CO2. Its pathway is cofactor biosynthesis; ubiquinone biosynthesis. Lyase that catalyzes the C1-decarboxylation of 4-hydroxy-3-methoxy-5-(all-trans-polyprenyl)benzoic acid into 2-methoxy-6-(all-trans-polyprenyl)phenol during ubiquinone biosynthesis. The protein is Ubiquinone biosynthesis protein COQ4, mitochondrial of Clavispora lusitaniae (strain ATCC 42720) (Yeast).